Here is a 116-residue protein sequence, read N- to C-terminus: Flagellar hook-basal body complex protein FliE (116 aa).

The protein belongs to the FliE family.

Its subcellular location is the bacterial flagellum basal body. In Rhizobium rhizogenes (strain K84 / ATCC BAA-868) (Agrobacterium radiobacter), this protein is Flagellar hook-basal body complex protein FliE.